A 426-amino-acid polypeptide reads, in one-letter code: Large envelope protein (426 aa).

Glycine 2 is lipidated: N-myristoyl glycine; by host. Residues 2–143 (GNNIKVTFNP…PPLRDTHPHL (142 aa)) are pre-S1. Positions 2-202 (GNNIKVTFNP…PSTTGDPAQS (201 aa)) are pre-S. The Virion surface; in external conformation segment spans residues 2 to 209 (GNNIKVTFNP…AQSPEMSPSS (208 aa)). Residues 2–281 (GNNIKVTFNP…NGFRWMYLRR (280 aa)) lie on the Intravirion; in internal conformation side of the membrane. An N-linked (GlcNAc...) asparagine glycan is attached at asparagine 3. The disordered stretch occupies residues 107 to 142 (IRDIPRGLVPPQTPTNRDQGRKPTPPTPPLRDTHPH). The interval 144–202 (TMKNQTFHLQGFVDGLRDLTTTERQHNAYGDPFTTLSPVVPTVSTILSPPSTTGDPAQS) is pre-S2. The chain crosses the membrane as a helical span at residues 210–230 (LLGLLAGLQVVYFLWTKILTI). Topologically, residues 231-281 (AQNLDWWWTSLSFPGGIPECTGQNSQFQTCKHLPTSCPPTCNGFRWMYLRR) are intravirion; in external conformation. The helical transmembrane segment at 282 to 302 (FIIYLLVLLLCLIFLLVLLDW) threads the bilayer. Residues 303 to 374 (KGLIPVCPIQ…WALARFSWLN (72 aa)) are Virion surface-facing. Residue asparagine 346 is glycosylated (N-linked (GlcNAc...) asparagine; by host). The helical transmembrane segment at 375–395 (LLVPLLQWLGGISLIAWFLLI) threads the bilayer. Over 396-401 (WMIWFW) the chain is Intravirion. Residues 402–424 (GPALLSILPPFIPIFVLFFLIWV) traverse the membrane as a helical segment. Residues 425-426 (YI) lie on the Virion surface side of the membrane.

Belongs to the orthohepadnavirus major surface antigen family. As to quaternary structure, in its internal form (Li-HBsAg), interacts with the capsid protein and with the isoform S. Interacts with host chaperone CANX. Associates with host chaperone CANX through its pre-S2 N glycan; this association may be essential for isoform M proper secretion. In terms of assembly, interacts with isoform L. Interacts with the antigens of satellite virus HDV (HDVAgs); this interaction is required for encapsidation of HDV genomic RNA. Post-translationally, isoform M is N-terminally acetylated by host at a ratio of 90%, and N-glycosylated by host at the pre-S2 region. In terms of processing, myristoylated.

Its subcellular location is the virion membrane. In terms of biological role, the large envelope protein exists in two topological conformations, one which is termed 'external' or Le-HBsAg and the other 'internal' or Li-HBsAg. In its external conformation the protein attaches the virus to cell receptors and thereby initiating infection. This interaction determines the species specificity and liver tropism. This attachment induces virion internalization predominantly through caveolin-mediated endocytosis. The large envelope protein also assures fusion between virion membrane and endosomal membrane. In its internal conformation the protein plays a role in virion morphogenesis and mediates the contact with the nucleocapsid like a matrix protein. Functionally, the middle envelope protein plays an important role in the budding of the virion. It is involved in the induction of budding in a nucleocapsid independent way. In this process the majority of envelope proteins bud to form subviral lipoprotein particles of 22 nm of diameter that do not contain a nucleocapsid. The chain is Large envelope protein from Marmota monax (Woodchuck).